We begin with the raw amino-acid sequence, 230 residues long: NAD(P)H-hydrate epimerase (230 aa).

Residues 11–218 form the YjeF N-terminal domain; it reads AIDVDQELFT…ALQRKYELNL (208 aa). Residue 61 to 65 participates in (6S)-NADPHX binding; that stretch reads NNGGD. K(+) is bound by residues Asn62 and Asp126. (6S)-NADPHX contacts are provided by residues 130–136 and Asp159; that span reads GFSFKPP. Ser162 contributes to the K(+) binding site.

It belongs to the NnrE/AIBP family. The cofactor is K(+).

It catalyses the reaction (6R)-NADHX = (6S)-NADHX. The catalysed reaction is (6R)-NADPHX = (6S)-NADPHX. In terms of biological role, catalyzes the epimerization of the S- and R-forms of NAD(P)HX, a damaged form of NAD(P)H that is a result of enzymatic or heat-dependent hydration. This is a prerequisite for the S-specific NAD(P)H-hydrate dehydratase to allow the repair of both epimers of NAD(P)HX. The sequence is that of NAD(P)H-hydrate epimerase from Drosophila erecta (Fruit fly).